A 184-amino-acid chain; its full sequence is Protein GrpE (184 aa).

A disordered region spans residues 1 to 26 (MTAPQEPVDSTPESGENAATPGLEDD).

This sequence belongs to the GrpE family. As to quaternary structure, homodimer.

Its subcellular location is the cytoplasm. Functionally, participates actively in the response to hyperosmotic and heat shock by preventing the aggregation of stress-denatured proteins, in association with DnaK and GrpE. It is the nucleotide exchange factor for DnaK and may function as a thermosensor. Unfolded proteins bind initially to DnaJ; upon interaction with the DnaJ-bound protein, DnaK hydrolyzes its bound ATP, resulting in the formation of a stable complex. GrpE releases ADP from DnaK; ATP binding to DnaK triggers the release of the substrate protein, thus completing the reaction cycle. Several rounds of ATP-dependent interactions between DnaJ, DnaK and GrpE are required for fully efficient folding. This is Protein GrpE from Bordetella bronchiseptica (strain ATCC BAA-588 / NCTC 13252 / RB50) (Alcaligenes bronchisepticus).